The chain runs to 263 residues: Phosphatidylglycerol--prolipoprotein diacylglyceryl transferase (263 aa).

Helical transmembrane passes span I15–A35, F52–Q72, I83–V103, and A112–I132. Residue R134 participates in a 1,2-diacyl-sn-glycero-3-phospho-(1'-sn-glycerol) binding. 3 consecutive transmembrane segments (helical) span residues V170–L190, G200–M220, and F227–L247.

The protein belongs to the Lgt family.

Its subcellular location is the cell membrane. The enzyme catalyses L-cysteinyl-[prolipoprotein] + a 1,2-diacyl-sn-glycero-3-phospho-(1'-sn-glycerol) = an S-1,2-diacyl-sn-glyceryl-L-cysteinyl-[prolipoprotein] + sn-glycerol 1-phosphate + H(+). It functions in the pathway protein modification; lipoprotein biosynthesis (diacylglyceryl transfer). Catalyzes the transfer of the diacylglyceryl group from phosphatidylglycerol to the sulfhydryl group of the N-terminal cysteine of a prolipoprotein, the first step in the formation of mature lipoproteins. The sequence is that of Phosphatidylglycerol--prolipoprotein diacylglyceryl transferase from Streptococcus thermophilus (strain ATCC BAA-491 / LMD-9).